Here is a 95-residue protein sequence, read N- to C-terminus: Co-chaperonin GroES (95 aa).

The protein belongs to the GroES chaperonin family. As to quaternary structure, heptamer of 7 subunits arranged in a ring. Interacts with the chaperonin GroEL.

The protein resides in the cytoplasm. Its function is as follows. Together with the chaperonin GroEL, plays an essential role in assisting protein folding. The GroEL-GroES system forms a nano-cage that allows encapsulation of the non-native substrate proteins and provides a physical environment optimized to promote and accelerate protein folding. GroES binds to the apical surface of the GroEL ring, thereby capping the opening of the GroEL channel. The polypeptide is Co-chaperonin GroES (Desulfotalea psychrophila (strain LSv54 / DSM 12343)).